The following is a 315-amino-acid chain: Acetyl-coenzyme A carboxylase carboxyl transferase subunit alpha (315 aa).

A CoA carboxyltransferase C-terminal domain is found at 40 to 293 (LQDKSKTLTE…REELSSQLAM (254 aa)).

This sequence belongs to the AccA family. In terms of assembly, acetyl-CoA carboxylase is a heterohexamer composed of biotin carboxyl carrier protein (AccB), biotin carboxylase (AccC) and two subunits each of ACCase subunit alpha (AccA) and ACCase subunit beta (AccD).

The protein resides in the cytoplasm. The catalysed reaction is N(6)-carboxybiotinyl-L-lysyl-[protein] + acetyl-CoA = N(6)-biotinyl-L-lysyl-[protein] + malonyl-CoA. It participates in lipid metabolism; malonyl-CoA biosynthesis; malonyl-CoA from acetyl-CoA: step 1/1. Its function is as follows. Component of the acetyl coenzyme A carboxylase (ACC) complex. First, biotin carboxylase catalyzes the carboxylation of biotin on its carrier protein (BCCP) and then the CO(2) group is transferred by the carboxyltransferase to acetyl-CoA to form malonyl-CoA. This is Acetyl-coenzyme A carboxylase carboxyl transferase subunit alpha from Pseudomonas syringae pv. tomato (strain ATCC BAA-871 / DC3000).